The primary structure comprises 367 residues: Flagellar P-ring protein (367 aa).

The signal sequence occupies residues 1 to 22 (MRRMLVIRWILAIHLIATQVFA).

Belongs to the FlgI family. As to quaternary structure, the basal body constitutes a major portion of the flagellar organelle and consists of four rings (L,P,S, and M) mounted on a central rod.

It localises to the periplasm. It is found in the bacterial flagellum basal body. Assembles around the rod to form the L-ring and probably protects the motor/basal body from shearing forces during rotation. In Legionella pneumophila (strain Lens), this protein is Flagellar P-ring protein.